The primary structure comprises 227 residues: Large ribosomal subunit protein uL1 (227 aa).

This sequence belongs to the universal ribosomal protein uL1 family. In terms of assembly, part of the 50S ribosomal subunit.

In terms of biological role, binds directly to 23S rRNA. The L1 stalk is quite mobile in the ribosome, and is involved in E site tRNA release. Protein L1 is also a translational repressor protein, it controls the translation of the L11 operon by binding to its mRNA. The polypeptide is Large ribosomal subunit protein uL1 (Mesoplasma florum (strain ATCC 33453 / NBRC 100688 / NCTC 11704 / L1) (Acholeplasma florum)).